Consider the following 342-residue polypeptide: Sideroflexin-5 (342 aa).

A compositionally biased stretch (low complexity) spans 1 to 24 (MADTATTASAASAAASASNASSDA). Positions 1 to 29 (MADTATTASAASAAASASNASSDAPPFQL) are disordered. 4 helical membrane passes run 105-125 (IFMP…VVGL), 165-185 (FIQG…GLNV), 256-276 (LTRV…MSML), and 289-309 (LLPV…PLAI).

Belongs to the sideroflexin family. In terms of tissue distribution, specifically expressed in the brain.

It localises to the mitochondrion inner membrane. It catalyses the reaction citrate(in) = citrate(out). Its function is as follows. Mitochondrial amino-acid transporter. Transports citrate. Does not act as a serine transporter: not able to mediate transport of serine into mitochondria. In brown adipose tissue, plays a role in the regulation of UCP1-dependent thermogenesis probably by supporting mitochondrial glycerol-3-phosphate utilization. The protein is Sideroflexin-5 of Rattus norvegicus (Rat).